Consider the following 111-residue polypeptide: Transcription initiation factor IIA subunit 2 (111 aa).

The protein belongs to the TFIIA subunit 2 family. In terms of assembly, TFIIA is a heterodimer of the large unprocessed subunit 1 and a small subunit gamma. It was originally believed to be a heterotrimer of an alpha, a beta and a gamma subunit. Interacts with NCOA6 general coactivator. TFIIA forms a complex with TBP.

It is found in the nucleus. Its function is as follows. TFIIA is a component of the transcription machinery of RNA polymerase II and plays an important role in transcriptional activation. TFIIA in a complex with TBP mediates transcriptional activity. The chain is Transcription initiation factor IIA subunit 2 (gtf2a2) from Paralichthys olivaceus (Bastard halibut).